The primary structure comprises 147 residues: MVNEVIDINEAVRAYIAQIEGLRAEIGRLDATIATLRQSLATLKSLKTLGEGKTVLVPVGSIAQVEMKVEKMDKVVVSVGQNISAELEYEEALKYIEDEIKKLLTFRLVLEQAIAELYAKIEDLIAEAQQTSEEEKAEEEENEEKAE.

Belongs to the prefoldin subunit alpha family. In terms of assembly, heterohexamer of two alpha and four beta subunits.

The protein localises to the cytoplasm. Molecular chaperone capable of stabilizing a range of proteins. Seems to fulfill an ATP-independent, HSP70-like function in archaeal de novo protein folding. This Methanocaldococcus jannaschii (strain ATCC 43067 / DSM 2661 / JAL-1 / JCM 10045 / NBRC 100440) (Methanococcus jannaschii) protein is Prefoldin subunit alpha 2 (pfdA2).